We begin with the raw amino-acid sequence, 815 residues long: Plakophilin-2 (815 aa).

Residues 1–12 (MLKPHPEHKEQP) are compositionally biased toward basic and acidic residues. 2 disordered regions span residues 1–31 (MLKP…MAEE) and 76–105 (QLTL…ISSS). Over residues 13-25 (QDSFTPSGDSTPD) the composition is skewed to polar residues. Over residues 91–105 (SSLAESQSSCQISSS) the composition is skewed to low complexity. ARM repeat units lie at residues 317-357 (KGKP…NQCF), 360-399 (PDAK…NIVF), 402-442 (NENK…NLSS), 457-498 (PLTD…NLSS), 501-547 (PDGR…NLSY), 604-644 (PHGV…NLTA), 652-691 (AIAH…NISR), 693-737 (RELH…NLSQ), and 740-783 (ASNT…TLWR).

The protein belongs to the beta-catenin family.

Its subcellular location is the nucleus. It is found in the cell junction. The protein localises to the desmosome. The protein resides in the cytoplasm. Required for development of the heart, potentially via cell-cell adhesion and modulation of expression of cardiac precursor genes. Plays a role in desmosome cell-cell junctions and their intracellular connectivity. The sequence is that of Plakophilin-2 from Danio rerio (Zebrafish).